A 317-amino-acid chain; its full sequence is MAQNLSCENWLALENILKKYYLSAFYGIEFIVGMLGNFTVVFGYLFCMKNWNSSNVYLFNLSISDLAFLCTLPMLIRSYATGNWTYGDVLCISNRYVLHANLYTSILFLTFISIDRYLLMKFPFREHILQKKEFAILISLAVWVLVTLEVLPMLTFITSTPIEKGDSCVDYASSGNPKYSLIYSLCLTLLGFLIPLSVMCFFYYKMVVFLKKRSQQQATVLSLNKPLRLVVLAVVIFSVLFTPYHIMRNVRIASRLDSWPQGCSQKAIKCLYILTRPLAFLNSAVNPIFYFLVGDHFRDMLFSKLRQYFKSLTSFRL.

At 1–27 (MAQNLSCENWLALENILKKYYLSAFYG) the chain is on the extracellular side. Asparagine 4 carries N-linked (GlcNAc...) asparagine glycosylation. A helical transmembrane segment spans residues 28–48 (IEFIVGMLGNFTVVFGYLFCM). At 49–55 (KNWNSSN) the chain is on the cytoplasmic side. Residues 56 to 76 (VYLFNLSISDLAFLCTLPMLI) form a helical membrane-spanning segment. Topologically, residues 77-99 (RSYATGNWTYGDVLCISNRYVLH) are extracellular. Residues cysteine 91 and cysteine 168 are joined by a disulfide bond. A helical transmembrane segment spans residues 100 to 120 (ANLYTSILFLTFISIDRYLLM). Over 121 to 133 (KFPFREHILQKKE) the chain is Cytoplasmic. A helical transmembrane segment spans residues 134–154 (FAILISLAVWVLVTLEVLPML). Topologically, residues 155–181 (TFITSTPIEKGDSCVDYASSGNPKYSL) are extracellular. Residues 182 to 202 (IYSLCLTLLGFLIPLSVMCFF) traverse the membrane as a helical segment. Residues 203–226 (YYKMVVFLKKRSQQQATVLSLNKP) lie on the Cytoplasmic side of the membrane. A helical transmembrane segment spans residues 227-247 (LRLVVLAVVIFSVLFTPYHIM). Residues 248-276 (RNVRIASRLDSWPQGCSQKAIKCLYILTR) are Extracellular-facing. Residues 277-297 (PLAFLNSAVNPIFYFLVGDHF) form a helical membrane-spanning segment. Residues 298-317 (RDMLFSKLRQYFKSLTSFRL) lie on the Cytoplasmic side of the membrane.

This sequence belongs to the G-protein coupled receptor 1 family. In terms of tissue distribution, expressed in retina.

The protein resides in the cell membrane. G protein-coupled receptor for succinate able to mediate signaling through Gq/GNAQ or Gi/GNAI second messengers depending on the cell type and the processes regulated. Succinate-SUCNR1 signaling serves as a link between metabolic stress, inflammation and energy homeostasisn. In macrophages, plays a range of immune-regulatory roles. During inflammation, succinate-SUCNR1 signaling may act as an anti-inflammatory mediator or boost inflammation depending on the inflammatory status of cells. Hyperpolarizes M2 macrophages versus M1 phenotype through Gq signaling by regulating the transcription of genes involved in immune function. In activated M1 macrophages, plays a pro-inflammatory role in response to LPS. Expressed in dendritic cells, where it is involved in the sensing of immunological danger and enhances immunity. Mediates succinate triggered intracelleular calcium mobilization, induces migratory responses and acts in synergy with Toll-like receptor ligands for the production of proinflammatory cytokines as well as an enhancement of antigen-specific activation of helper T cells. In the small intestine, mediates the activation of tuft cells by dietary succinate and triggers type 2 immunity. In adipocytes, plays an important role in the control of energy metabolism. In response to succinate, controls leptin expression in an AMPK-JNK-CEBPA-dependent as well as circadian clock-regulated manner. In muscle tissue, is expressed in non-muscle cells and coordinates muscle remodeling in response to the succinate produced during exercise training in a paracrine manner. In retina, acts as a mediator of vessel growth during retinal development. In response to succinate, regulates the production of angiogenic factors, including VEGF, by retinal ganglion neurons. This Rattus norvegicus (Rat) protein is Succinate receptor 1 (Sucnr1).